The primary structure comprises 275 residues: Large ribosomal subunit protein uL2cz/uL2cy (275 aa).

2 disordered regions span residues 1–26 and 224–275; these read MAIHLYKTSTPSTRNGTVDSRQVKSN and MNPV…RRTK. The segment covering 7–26 has biased composition (polar residues); sequence KTSTPSTRNGTVDSRQVKSN.

Belongs to the universal ribosomal protein uL2 family. Part of the 50S ribosomal subunit.

It is found in the plastid. Its subcellular location is the chloroplast. This is Large ribosomal subunit protein uL2cz/uL2cy (rpl2-A) from Phaseolus angularis (Azuki bean).